A 368-amino-acid polypeptide reads, in one-letter code: 1-deoxy-D-xylulose 5-phosphate reductoisomerase (368 aa).

NADPH-binding residues include T10, G11, S12, I13, Q38, and N100. K101 lines the 1-deoxy-D-xylulose 5-phosphate pocket. E102 lines the NADPH pocket. D125 lines the Mn(2+) pocket. 1-deoxy-D-xylulose 5-phosphate-binding residues include S126, E127, S151, and H172. E127 contacts Mn(2+). G178 lines the NADPH pocket. Residues S185, N190, K191, and E194 each contribute to the 1-deoxy-D-xylulose 5-phosphate site. E194 is a Mn(2+) binding site.

This sequence belongs to the DXR family. Mg(2+) is required as a cofactor. The cofactor is Mn(2+).

The catalysed reaction is 2-C-methyl-D-erythritol 4-phosphate + NADP(+) = 1-deoxy-D-xylulose 5-phosphate + NADPH + H(+). Its pathway is isoprenoid biosynthesis; isopentenyl diphosphate biosynthesis via DXP pathway; isopentenyl diphosphate from 1-deoxy-D-xylulose 5-phosphate: step 1/6. Catalyzes the NADPH-dependent rearrangement and reduction of 1-deoxy-D-xylulose-5-phosphate (DXP) to 2-C-methyl-D-erythritol 4-phosphate (MEP). The protein is 1-deoxy-D-xylulose 5-phosphate reductoisomerase of Tropheryma whipplei (strain Twist) (Whipple's bacillus).